The sequence spans 226 residues: Ribosomal RNA small subunit methyltransferase G (226 aa).

S-adenosyl-L-methionine-binding positions include G95, L100, 146-147 (VE), and R159.

It belongs to the methyltransferase superfamily. RNA methyltransferase RsmG family.

Its subcellular location is the cytoplasm. The enzyme catalyses guanosine(527) in 16S rRNA + S-adenosyl-L-methionine = N(7)-methylguanosine(527) in 16S rRNA + S-adenosyl-L-homocysteine. Its function is as follows. Specifically methylates the N7 position of guanine in position 527 of 16S rRNA. The chain is Ribosomal RNA small subunit methyltransferase G from Acidovorax sp. (strain JS42).